Here is a 252-residue protein sequence, read N- to C-terminus: Triosephosphate isomerase (252 aa).

10–12 (NWK) serves as a coordination point for substrate. The Electrophile role is filled by H96. Residue E168 is the Proton acceptor of the active site. Residues G174, S214, and 235–236 (GG) each bind substrate.

It belongs to the triosephosphate isomerase family. As to quaternary structure, homodimer.

Its subcellular location is the cytoplasm. It carries out the reaction D-glyceraldehyde 3-phosphate = dihydroxyacetone phosphate. The protein operates within carbohydrate biosynthesis; gluconeogenesis. It functions in the pathway carbohydrate degradation; glycolysis; D-glyceraldehyde 3-phosphate from glycerone phosphate: step 1/1. Its function is as follows. Involved in the gluconeogenesis. Catalyzes stereospecifically the conversion of dihydroxyacetone phosphate (DHAP) to D-glyceraldehyde-3-phosphate (G3P). The polypeptide is Triosephosphate isomerase (Streptococcus mutans serotype c (strain ATCC 700610 / UA159)).